The primary structure comprises 342 residues: uncharacterized protein (342 aa).

A run of 3 helical transmembrane segments spans residues 35–55, 134–154, and 161–180; these read YFRV…WCFS, LLFL…IIYF, and LFIT…YCFS. Disordered regions lie at residues 198–220 and 311–342; these read SSDN…QQYN and IINN…NYTN.

Its subcellular location is the membrane. This is an uncharacterized protein from Dictyostelium discoideum (Social amoeba).